The chain runs to 388 residues: MAQKKDYYEILGVPRNATEEEIKRAYRRLAKQYHPDANPGNKEAEEKFKEINEAYEVLSDPEKRKLYDQFGHAAFDPKYGAQGSGGFSGGFGGGFADFDFGSFGDIFEDLFEGFDIFGTSRRRKEAPRKGADIYVDLELTLKESVFGCEKEIPIYRTEKCSVCGGSGVKPGSAPVRCQKCGGTGQIRSRQATFFGEFTTIKTCDACGGTGTIITDPCRECGGTGNVRRQRRVKINIPAGIDDGQVITLRGEGESGIKGGPNGDLHIKIKIAPHPVFKRVGQDLYIEVPITFVNAALGGEIEIPTLDGKTKVRIEPGTQNGDEVRIKGKGVPNLRSRGRGDLVVKFIVEVPKKLTEKQKELLREFERLSSEEGYEKRKHFWDRIREAFS.

The J domain occupies 6–71; the sequence is DYYEILGVPR…EKRKLYDQFG (66 aa). The CR-type zinc-finger motif lies at 147–229; the sequence is GCEKEIPIYR…CGGTGNVRRQ (83 aa). Zn(2+)-binding residues include cysteine 160, cysteine 163, cysteine 177, cysteine 180, cysteine 203, cysteine 206, cysteine 217, and cysteine 220. 4 CXXCXGXG motif repeats span residues 160–167, 177–184, 203–210, and 217–224; these read CSVCGGSG, CQKCGGTG, CDACGGTG, and CRECGGTG.

The protein belongs to the DnaJ family. Homodimer. Zn(2+) serves as cofactor.

Its subcellular location is the cytoplasm. Functionally, participates actively in the response to hyperosmotic and heat shock by preventing the aggregation of stress-denatured proteins and by disaggregating proteins, also in an autonomous, DnaK-independent fashion. Unfolded proteins bind initially to DnaJ; upon interaction with the DnaJ-bound protein, DnaK hydrolyzes its bound ATP, resulting in the formation of a stable complex. GrpE releases ADP from DnaK; ATP binding to DnaK triggers the release of the substrate protein, thus completing the reaction cycle. Several rounds of ATP-dependent interactions between DnaJ, DnaK and GrpE are required for fully efficient folding. Also involved, together with DnaK and GrpE, in the DNA replication of plasmids through activation of initiation proteins. The chain is Chaperone protein DnaJ from Caldicellulosiruptor bescii (strain ATCC BAA-1888 / DSM 6725 / KCTC 15123 / Z-1320) (Anaerocellum thermophilum).